The sequence spans 352 residues: DNA ADP-ribosyl glycohydrolase (352 aa).

Residues 1–155 (MITYGSGDLL…IYPPSGGSRA (155 aa)) form the Macro domain. Residues 8–9 (DL), 20–22 (TVN), 31–34 (IALQ), and Thr-79 contribute to the ADP-D-ribose site. Lys-80 acts as the Nucleophile in catalysis. 117 to 121 (GVGNG) is a binding site for ADP-D-ribose. Residues 164–352 (MTWGRAVILE…VALDRILMTA (189 aa)) form an interaction with DarT region.

Belongs to the DarG ADP-ribosyl glycohydrolase family. Interacts (via C-terminus) with cognate toxin DarT; this heterodimeric complex neutralizes the toxic effect of DarT by preventing ssDNA binding to DarT and consequently inactivating the toxin by direct protein-protein interactions.

The enzyme catalyses an N-(ADP-alpha-D-ribosyl)-thymidine in DNA + H2O = a thymidine in DNA + ADP-D-ribose. Its function is as follows. Antitoxin component of the hybrid type II/IV toxin-antitoxin (TA) system DarTG, which plays a crucial role in controlling bacterial growth and bacteriophage infection. De-ADP-ribosylates DNA (probably) modified on thymidine by its cognate toxin DarT, which neutralizes the activity of cognate toxin DarT. The sequence is that of DNA ADP-ribosyl glycohydrolase from Mycobacterium bovis (strain BCG / Pasteur 1173P2).